The chain runs to 350 residues: Phosphoribosylformylglycinamidine cyclo-ligase (350 aa).

The protein belongs to the AIR synthase family.

It localises to the cytoplasm. The catalysed reaction is 2-formamido-N(1)-(5-O-phospho-beta-D-ribosyl)acetamidine + ATP = 5-amino-1-(5-phospho-beta-D-ribosyl)imidazole + ADP + phosphate + H(+). It functions in the pathway purine metabolism; IMP biosynthesis via de novo pathway; 5-amino-1-(5-phospho-D-ribosyl)imidazole from N(2)-formyl-N(1)-(5-phospho-D-ribosyl)glycinamide: step 2/2. The sequence is that of Phosphoribosylformylglycinamidine cyclo-ligase from Cupriavidus taiwanensis (strain DSM 17343 / BCRC 17206 / CCUG 44338 / CIP 107171 / LMG 19424 / R1) (Ralstonia taiwanensis (strain LMG 19424)).